The chain runs to 69 residues: DNA-directed RNA polymerase subunit epsilon (69 aa).

The protein belongs to the RNA polymerase subunit epsilon family. In terms of assembly, RNAP is composed of a core of 2 alpha, a beta and a beta' subunit. The core is associated with a delta subunit, and at least one of epsilon or omega. When a sigma factor is associated with the core the holoenzyme is formed, which can initiate transcription.

It carries out the reaction RNA(n) + a ribonucleoside 5'-triphosphate = RNA(n+1) + diphosphate. Functionally, a non-essential component of RNA polymerase (RNAP). This Bacillus velezensis (strain DSM 23117 / BGSC 10A6 / LMG 26770 / FZB42) (Bacillus amyloliquefaciens subsp. plantarum) protein is DNA-directed RNA polymerase subunit epsilon.